Consider the following 473-residue polypeptide: H(+)/Cl(-) exchange transporter ClcA (473 aa).

At 1–32 (MKTDTPSLETPQAARLRRRQLIRQLLERDKTP) the chain is on the cytoplasmic side. The chain crosses the membrane as a helical span at residues 33–69 (LAILFMAAVVGTLVGLAAVAFDKGVAWLQNQRMGALV). At 70-76 (HTADNYP) the chain is on the periplasmic side. The helical transmembrane segment at 77 to 100 (LLLTVAFLCSAVLAMFGYFLVRKY) threads the bilayer. The Selectivity filter part_1 motif lies at 106–110 (GSGIP). Residue serine 107 participates in chloride binding. An intramembrane region (helical) is located at residues 109–116 (IPEIEGAL). Residues 117-123 (EDQRPVR) lie on the Cytoplasmic side of the membrane. The next 2 membrane-spanning stretches (helical) occupy residues 124–141 (WWRVLPVKFFGGLGTLGG) and 148–166 (EGPTVQIGGNIGRMVLDIF). Residues 146–150 (GREGP) carry the Selectivity filter part_2 motif. Residues 167 to 176 (RLKGDEARHT) lie on the Cytoplasmic side of the membrane. Intramembrane regions (helical) lie at residues 177 to 189 (LLATGAAAGLAAA) and 193 to 201 (PLAGILFII). The Cytoplasmic segment spans residues 202–214 (EEMRPQFRYTLIS). A helical membrane pass occupies residues 215–232 (IKAVFIGVIMSTIMYRIF). Residues 233–252 (NHEVALIDVGKLSDAPLNTL) lie on the Periplasmic side of the membrane. A helical transmembrane segment spans residues 253-281 (WLYLILGIIFGIFGPIFNKWVLGMQDLLH). The Cytoplasmic portion of the chain corresponds to 282 to 287 (RVHGGN). A helical membrane pass occupies residues 288–309 (ITKWILMGGAIGGLCGLLGFVA). Residues 310 to 329 (PATSGGGFNLIPIATAGNFS) lie on the Periplasmic side of the membrane. The next 2 helical transmembrane spans lie at 330-349 (MGMLVFIFVARVITTLLCFS) and 355-376 (GIFAPMLALGTVLGTAFGMVAV). A Selectivity filter part_3 motif is present at residues 355-359 (GIFAP). Chloride is bound by residues isoleucine 356 and phenylalanine 357. Over 377-386 (ELFPQYHLEA) the chain is Periplasmic. An intramembrane region (helical) is located at residues 387 to 401 (GTFAIAGMGALLAAS). An intramembrane region (note=Loop between two helices) is located at residues 402–404 (IRA). An intramembrane region (helical) is located at residues 405–416 (PLTGIILVLEMT). An intramembrane region (note=Loop between two helices) is located at residues 417 to 421 (DNYQL). The helical transmembrane segment at 422-438 (ILPMIITGLGATLLAQF) threads the bilayer. Residues 439 to 473 (TGGKPLYSAILARTLAKQEAEQLARSKAASASENT) are Cytoplasmic-facing. Residue tyrosine 445 participates in chloride binding.

Belongs to the chloride channel (TC 2.A.49) family. ClcA subfamily. Homodimer.

The protein resides in the cell inner membrane. It carries out the reaction 2 chloride(in) + H(+)(out) = 2 chloride(out) + H(+)(in). Proton-coupled chloride transporter. Functions as antiport system and exchanges two chloride ions for 1 proton. Probably acts as an electrical shunt for an outwardly-directed proton pump that is linked to amino acid decarboxylation, as part of the extreme acid resistance (XAR) response. This chain is H(+)/Cl(-) exchange transporter ClcA, found in Escherichia coli O9:H4 (strain HS).